A 124-amino-acid chain; its full sequence is Late histone H2A.2.1 (124 aa).

A compositionally biased stretch (basic residues) spans 1–18 (MSGRGKGAKAKSKAKSRS). The tract at residues 1 to 21 (MSGRGKGAKAKSKAKSRSSRA) is disordered. The residue at position 2 (serine 2) is an N-acetylserine. Serine 2 is modified (phosphoserine). N5-methylglutamine is present on glutamine 104. Lysine 119 is covalently cross-linked (Glycyl lysine isopeptide (Lys-Gly) (interchain with G-Cter in ubiquitin)).

The protein belongs to the histone H2A family. As to quaternary structure, the nucleosome is a histone octamer containing two molecules each of H2A, H2B, H3 and H4 assembled in one H3-H4 heterotetramer and two H2A-H2B heterodimers. The octamer wraps approximately 147 bp of DNA. In terms of processing, monoubiquitination of Lys-119 gives a specific tag for epigenetic transcriptional repression. Post-translationally, phosphorylation of Ser-2 directly represses transcription.

The protein localises to the nucleus. The protein resides in the chromosome. In terms of biological role, core component of nucleosome. Nucleosomes wrap and compact DNA into chromatin, limiting DNA accessibility to the cellular machineries which require DNA as a template. Histones thereby play a central role in transcription regulation, DNA repair, DNA replication and chromosomal stability. DNA accessibility is regulated via a complex set of post-translational modifications of histones, also called histone code, and nucleosome remodeling. The sequence is that of Late histone H2A.2.1 from Psammechinus miliaris (Green sea urchin).